The primary structure comprises 655 residues: Fructose-1,6-bisphosphatase class 3 (655 aa).

The protein belongs to the FBPase class 3 family. It depends on Mn(2+) as a cofactor.

The catalysed reaction is beta-D-fructose 1,6-bisphosphate + H2O = beta-D-fructose 6-phosphate + phosphate. The protein operates within carbohydrate biosynthesis; gluconeogenesis. The chain is Fructose-1,6-bisphosphatase class 3 from Porphyromonas gingivalis (strain ATCC 33277 / DSM 20709 / CIP 103683 / JCM 12257 / NCTC 11834 / 2561).